A 2067-amino-acid polypeptide reads, in one-letter code: Lipoxygenase homology domain-containing protein 1 (2067 aa).

PLAT domains lie at Arg-43 to Leu-160, Asn-172 to Leu-287, Ile-296 to Tyr-412, Phe-425 to Thr-540, Ala-553 to Leu-673, Phe-684 to Tyr-803, Val-814 to Leu-934, Thr-969 to Phe-1087, Val-1100 to Val-1225, Val-1254 to Tyr-1372, Ile-1421 to Asp-1539, Val-1552 to Cys-1667, Thr-1679 to Ala-1797, Thr-1810 to Val-1931, and Val-1948 to Phe-2064.

The protein resides in the cell projection. The protein localises to the stereocilium. Its function is as follows. Involved in hearing. Required for normal function of hair cells in the inner ear. The chain is Lipoxygenase homology domain-containing protein 1 (LOXHD1) from Homo sapiens (Human).